Here is a 509-residue protein sequence, read N- to C-terminus: Maturase K (509 aa).

Belongs to the intron maturase 2 family. MatK subfamily.

It is found in the plastid. Its subcellular location is the chloroplast. Usually encoded in the trnK tRNA gene intron. Probably assists in splicing its own and other chloroplast group II introns. This is Maturase K from Schlumbergera truncata (Thanksgiving cactus).